Consider the following 123-residue polypeptide: Large ribosomal subunit protein bL17 (123 aa).

This sequence belongs to the bacterial ribosomal protein bL17 family. In terms of assembly, part of the 50S ribosomal subunit. Contacts protein L32.

The polypeptide is Large ribosomal subunit protein bL17 (Borrelia hermsii (strain HS1 / DAH)).